The following is a 454-amino-acid chain: tRNA modification GTPase MnmE (454 aa).

(6S)-5-formyl-5,6,7,8-tetrahydrofolate is bound by residues R23, E80, and K120. One can recognise a TrmE-type G domain in the interval 216–377 (GMKVVIAGKP…LRTHLKQSMG (162 aa)). K(+) is bound at residue N226. GTP-binding positions include 226–231 (NAGKSS), 245–251 (TAIAGTT), 270–273 (DTAG), and 335–338 (NKAD). S230 serves as a coordination point for Mg(2+). K(+)-binding residues include T245, I247, and T250. T251 is a binding site for Mg(2+). (6S)-5-formyl-5,6,7,8-tetrahydrofolate is bound at residue K454.

It belongs to the TRAFAC class TrmE-Era-EngA-EngB-Septin-like GTPase superfamily. TrmE GTPase family. In terms of assembly, homodimer. Heterotetramer of two MnmE and two MnmG subunits. Requires K(+) as cofactor.

Its subcellular location is the cytoplasm. Its function is as follows. Exhibits a very high intrinsic GTPase hydrolysis rate. Involved in the addition of a carboxymethylaminomethyl (cmnm) group at the wobble position (U34) of certain tRNAs, forming tRNA-cmnm(5)s(2)U34. In Sodalis glossinidius (strain morsitans), this protein is tRNA modification GTPase MnmE.